A 735-amino-acid polypeptide reads, in one-letter code: Mitochondrial potassium channel ATP-binding subunit (735 aa).

A mitochondrion-targeting transit peptide spans 1–25 (MLVHLFRVGIRGGPFPGRLLPPLRF). Over 26 to 144 (QTFSAVRNTW…KLFWQFLHPH (119 aa)) the chain is Mitochondrial matrix. The chain crosses the membrane as a helical span at residues 145-165 (LLVLGVAVVLALGAALVNVQI). The region spanning 150–437 (VAVVLALGAA…LSVLFGQVVR (288 aa)) is the ABC transmembrane type-1 domain. At 166–195 (PLLLGQLVEVVAKYTRDHVGSFMTESQNLS) the chain is on the mitochondrial intermembrane side. The chain crosses the membrane as a helical span at residues 196–216 (THLLILYGVQGLLTFGYLVLL). Residues 217–295 (SHVGERMAVD…SLSMLSTRLT (79 aa)) lie on the Mitochondrial matrix side of the membrane. A helical membrane pass occupies residues 296 to 316 (LLLMVATPALMGVGTLMGSGL). The Mitochondrial intermembrane portion of the chain corresponds to 317–735 (RKLSRQCQEQ…EGPRSHQHKS (419 aa)). The region spanning 472–709 (VTFQNVCFSY…GGLYAELIRR (238 aa)) is the ABC transporter domain. 507-514 (GQSGGGKT) contacts ATP. Residues 712–735 (LDAPRTAAPPPKKPEGPRSHQHKS) are disordered.

The protein belongs to the ABC transporter superfamily. ABCB family. Multidrug resistance exporter (TC 3.A.1.201) subfamily. As to quaternary structure, the mitochondrial potassium channel (mitoK(ATP)) is composed of 4 subunits of CCDC51/MITOK and 4 subunits of ABCB8/MITOSUR. Interacts with C10orf88/PAAT. Interacts with NRP1; NRP1 regulates ABCB8/MITOSUR protein levels in mitochondria. In terms of tissue distribution, ubiquitous.

The protein resides in the mitochondrion inner membrane. Its activity is regulated as follows. Channel activity inhibited by ATP via ABCB8/MITOSUR subunit. ATP-binding subunit of the mitochondrial ATP-gated potassium channel (mitoK(ATP)). Together with pore-forming subunit CCDC51/MITOK of the mitoK(ATP) channel, mediates ATP-dependent potassium currents across the mitochondrial inner membrane. An increase in ATP intracellular levels closes the channel, inhibiting K(+) transport, whereas a decrease in ATP levels enhances K(+) uptake in the mitochondrial matrix. Plays a role in mitochondrial iron transport. Required for maintenance of normal cardiac function, possibly by influencing mitochondrial iron export and regulating the maturation of cytosolic iron sulfur cluster-containing enzymes. The polypeptide is Mitochondrial potassium channel ATP-binding subunit (Homo sapiens (Human)).